Here is a 406-residue protein sequence, read N- to C-terminus: Proteasome-activating nucleotidase 1 (406 aa).

Over residues 1–12 (MTDTVEDVELPY) the composition is skewed to acidic residues. The tract at residues 1–20 (MTDTVEDVELPYDDSASQQD) is disordered. The stretch at 12–70 (YDDSASQQDKLEALEEQLSTLEEENEEMRDRLLDANAENNKYQQKLERLSHENKKLKQS) forms a coiled coil. Residues 192–197 (GTGKTL) and His-331 contribute to the ATP site. The tract at residues 385–406 (AREKLDQDSEPAAATDVSRTFA) is disordered. The tract at residues 404–406 (TFA) is docks into pockets in the proteasome alpha-ring to cause gate opening.

The protein belongs to the AAA ATPase family. As to quaternary structure, homohexamer. The hexameric complex has a two-ring architecture resembling a top hat that caps the 20S proteasome core at one or both ends. Upon ATP-binding, the C-terminus of PAN interacts with the alpha-rings of the proteasome core by binding to the intersubunit pockets.

It localises to the cytoplasm. In terms of biological role, ATPase which is responsible for recognizing, binding, unfolding and translocation of substrate proteins into the archaeal 20S proteasome core particle. Is essential for opening the gate of the 20S proteasome via an interaction with its C-terminus, thereby allowing substrate entry and access to the site of proteolysis. Thus, the C-termini of the proteasomal ATPase function like a 'key in a lock' to induce gate opening and therefore regulate proteolysis. Unfolding activity requires energy from ATP hydrolysis, whereas ATP binding alone promotes ATPase-20S proteasome association which triggers gate opening, and supports translocation of unfolded substrates. In Halobacterium salinarum (strain ATCC 700922 / JCM 11081 / NRC-1) (Halobacterium halobium), this protein is Proteasome-activating nucleotidase 1.